The chain runs to 257 residues: Putative hydro-lyase Bphy_2364 (257 aa).

The protein belongs to the D-glutamate cyclase family.

The protein is Putative hydro-lyase Bphy_2364 of Paraburkholderia phymatum (strain DSM 17167 / CIP 108236 / LMG 21445 / STM815) (Burkholderia phymatum).